The sequence spans 486 residues: NADH-quinone oxidoreductase subunit N (486 aa).

The next 14 membrane-spanning stretches (helical) occupy residues 8–28 (LIAL…ILSI), 36–56 (FIAF…YFLI), 74–94 (ILYI…AYPW), 104–124 (EFYL…ISNH), 125–145 (MASL…LIAY), 160–180 (LVLS…IYAI), 204–224 (VLFG…MVPF), 239–259 (VLSF…LYFF), 270–290 (IFLI…LMAI), 298–318 (FFGY…LVSK), 329–349 (GIFL…INLF), 374–394 (ASIV…LGFF), 407–427 (HLWT…YGYL), and 459–479 (ILIF…NPLI).

It belongs to the complex I subunit 2 family. In terms of assembly, NDH-1 is composed of 13 different subunits. Subunits NuoA, H, J, K, L, M, N constitute the membrane sector of the complex.

It is found in the cell membrane. The catalysed reaction is a quinone + NADH + 5 H(+)(in) = a quinol + NAD(+) + 4 H(+)(out). Functionally, NDH-1 shuttles electrons from NADH, via FMN and iron-sulfur (Fe-S) centers, to quinones in the respiratory chain. The immediate electron acceptor for the enzyme in this species is believed to be ubiquinone. Couples the redox reaction to proton translocation (for every two electrons transferred, four hydrogen ions are translocated across the cytoplasmic membrane), and thus conserves the redox energy in a proton gradient. In Buchnera aphidicola subsp. Schizaphis graminum (strain Sg), this protein is NADH-quinone oxidoreductase subunit N.